Consider the following 684-residue polypeptide: Phenoloxidase 2 (684 aa).

Positions 1-50 (MADKKNLLLLFDHPTEPVFMDKGKRVTVFDVPDSFLTDRYRPISNEVQSR) are excised as a propeptide. Cu cation contacts are provided by His-208, His-212, and His-238. Glu-350 functions as the Proton acceptor in the catalytic mechanism. Positions 365, 369, and 405 each coordinate Cu cation. Asn-448 and Asn-492 each carry an N-linked (GlcNAc...) asparagine glycan. 2 disulfide bridges follow: Cys-581–Cys-623 and Cys-583–Cys-630. Residues Asn-665 and Asn-677 are each glycosylated (N-linked (GlcNAc...) asparagine).

Belongs to the tyrosinase family. The cofactor is Cu(2+). Post-translationally, upon activation, a trypsin type protease cleaves prophenol oxidase to yield the active enzyme.

Its subcellular location is the secreted. It carries out the reaction 2 L-dopa + O2 = 2 L-dopaquinone + 2 H2O. It catalyses the reaction L-tyrosine + O2 = L-dopaquinone + H2O. Functionally, this is a copper-containing oxidase that functions in the formation of pigments such as melanins and other polyphenolic compounds. Catalyzes the rate-limiting conversions of tyrosine to DOPA, DOPA to DOPA-quinone and possibly 5,6 dihydroxyindole to indole-5'6 quinonee. This is Phenoloxidase 2 (PPO2) from Drosophila melanogaster (Fruit fly).